The sequence spans 393 residues: 1-deoxy-D-xylulose 5-phosphate reductoisomerase (393 aa).

Thr-10, Gly-11, Ser-12, Ile-13, Arg-37, Gln-38, and Asn-124 together coordinate NADPH. Lys-125 contributes to the 1-deoxy-D-xylulose 5-phosphate binding site. Glu-126 is an NADPH binding site. Asp-150 contributes to the Mn(2+) binding site. Positions 151, 152, 179, and 202 each coordinate 1-deoxy-D-xylulose 5-phosphate. A Mn(2+)-binding site is contributed by Glu-152. Gly-208 is an NADPH binding site. 1-deoxy-D-xylulose 5-phosphate-binding residues include Ser-215, Asn-220, Lys-221, and Glu-224. Glu-224 contacts Mn(2+).

Belongs to the DXR family. The cofactor is Mg(2+). It depends on Mn(2+) as a cofactor.

It carries out the reaction 2-C-methyl-D-erythritol 4-phosphate + NADP(+) = 1-deoxy-D-xylulose 5-phosphate + NADPH + H(+). It participates in isoprenoid biosynthesis; isopentenyl diphosphate biosynthesis via DXP pathway; isopentenyl diphosphate from 1-deoxy-D-xylulose 5-phosphate: step 1/6. Its function is as follows. Catalyzes the NADPH-dependent rearrangement and reduction of 1-deoxy-D-xylulose-5-phosphate (DXP) to 2-C-methyl-D-erythritol 4-phosphate (MEP). In Cupriavidus taiwanensis (strain DSM 17343 / BCRC 17206 / CCUG 44338 / CIP 107171 / LMG 19424 / R1) (Ralstonia taiwanensis (strain LMG 19424)), this protein is 1-deoxy-D-xylulose 5-phosphate reductoisomerase.